We begin with the raw amino-acid sequence, 288 residues long: MWVRQVPWSFTWAVLQLSWQSGWLLEVPNGPWRSLTFYPAWLTVSEGANATFTCSLSNWSEDLMLNWNRLSPSNQTEKQAAFCNGLSQPVQDARFQIIQLPNRHDFHMNILDTRRNDSGIYLCGAISLHPKAKIEESPGAELVVTERILETSTRYPSPSPKPEGRFQGMVIGIMSALVGIPVLLLLAWALAVFCSTSMSEARGAGSKDDTLKEEPSAAPVPSVAYEELDFQGREKTPELPTACVHTEYATIVFTEGLGASAMGRRGSADGLQGPRPPRHEDGHCSWPL.

The first 24 residues, 1-24 (MWVRQVPWSFTWAVLQLSWQSGWL), serve as a signal peptide directing secretion. Residues 25–169 (LEVPNGPWRS…PKPEGRFQGM (145 aa)) lie on the Extracellular side of the membrane. Positions 31–139 (PWRSLTFYPA…PKAKIEESPG (109 aa)) constitute an Ig-like V-type domain. 4 N-linked (GlcNAc...) asparagine glycosylation sites follow: Asn-49, Asn-58, Asn-74, and Asn-116. A disulfide bond links Cys-54 and Cys-123. The interval 70–77 (LSPSNQTE) is interaction with CD274/PDCD1L1. A helical membrane pass occupies residues 170–190 (VIGIMSALVGIPVLLLLAWAL). The Cytoplasmic portion of the chain corresponds to 191 to 288 (AVFCSTSMSE…HEDGHCSWPL (98 aa)). The ITIM motif signature appears at 223–228 (VAYEEL). The residue at position 225 (Tyr-225) is a Phosphotyrosine. Residue Lys-235 forms a Glycyl lysine isopeptide (Lys-Gly) (interchain with G-Cter in ubiquitin) linkage. Thr-236 carries the phosphothreonine; by MAPK3 modification. Positions 247–251 (EYATI) match the ITSM motif motif. A Phosphotyrosine modification is found at Tyr-248. Residues 263 to 288 (GRRGSADGLQGPRPPRHEDGHCSWPL) are disordered. Basic and acidic residues predominate over residues 277 to 288 (PRHEDGHCSWPL).

Monomer. Interacts with CD274/PDCD1L1. Interacts with CD273/PDCD1LG2. Interacts with FBXO38; leading to ubiquitination and degradation by the proteasome. In terms of processing, ubiquitinated at Lys-235 by the SCF(FBXO38) complex, leading to its proteasomal degradation. Ubiquitinated via 'Lys-48'-linked polyubiquitin chains. Deubiquitinated and thus stabilized by USP5. Post-translationally, tyrosine phosphorylated at Tyr-225 (within ITIM motif) and Tyr-248 (ITSM motif) upon ligand binding. Phosphorylation at Tyr-248 promotes the recruitment of the protein tyrosine phosphatase PTPN11/SHP-2 that mediates dephosphorylation of key TCR proximal signaling molecules, such as ZAP70, PRKCQ/PKCtheta and CD247/CD3zeta. Phosphorylation at Thr-236 promotes the recruitment of the deubiquitinase USP5. In terms of tissue distribution, thymus-specific.

Its subcellular location is the cell membrane. In terms of biological role, inhibitory receptor on antigen activated T-cells that plays a critical role in induction and maintenance of immune tolerance to self. Delivers inhibitory signals upon binding to ligands, such as CD274/PDCD1L1 and CD273/PDCD1LG2. Following T-cell receptor (TCR) engagement, PDCD1 associates with CD3-TCR in the immunological synapse and directly inhibits T-cell activation. Suppresses T-cell activation through the recruitment of PTPN11/SHP-2: following ligand-binding, PDCD1 is phosphorylated within the ITSM motif, leading to the recruitment of the protein tyrosine phosphatase PTPN11/SHP-2 that mediates dephosphorylation of key TCR proximal signaling molecules, such as ZAP70, PRKCQ/PKCtheta and CD247/CD3zeta. The PDCD1-mediated inhibitory pathway is exploited by tumors to attenuate anti-tumor immunity and facilitate tumor survival. In Mus musculus (Mouse), this protein is Programmed cell death protein 1.